A 397-amino-acid chain; its full sequence is Major outer membrane porin, serovar H (397 aa).

Positions 1–22 (MKKLLKSVLVFAALSSASSLQA) are cleaved as a signal peptide.

Belongs to the chlamydial porin (CP) (TC 1.B.2) family. As to quaternary structure, part of a disulfide cross-linked outer membrane complex (COMC) composed of the major outer membrane porin (MOMP), the small cysteine-rich protein (OmcA) and the large cysteine-rich periplasmic protein (OmcB).

It is found in the cell outer membrane. Its function is as follows. In elementary bodies (EBs, the infectious stage, which is able to survive outside the host cell) provides the structural integrity of the outer envelope through disulfide cross-links with the small cysteine-rich protein and the large cysteine-rich periplasmic protein. It has been described in publications as the Sarkosyl-insoluble COMC (Chlamydia outer membrane complex), and serves as the functional equivalent of peptidoglycan. Functionally, permits diffusion of specific solutes through the outer membrane. The protein is Major outer membrane porin, serovar H (ompA) of Chlamydia trachomatis.